Here is a 78-residue protein sequence, read N- to C-terminus: MSTIEERVKKIVAEQLGVKEEEVTNSASFVEDLGADSLDTVELVMALEEEFETEIPDEKAEKITTVQEAIDYIVAHQQ.

The region spanning 2-77 (STIEERVKKI…EAIDYIVAHQ (76 aa)) is the Carrier domain. An O-(pantetheine 4'-phosphoryl)serine modification is found at Ser-37.

The protein belongs to the acyl carrier protein (ACP) family. In terms of processing, 4'-phosphopantetheine is transferred from CoA to a specific serine of apo-ACP by AcpS. This modification is essential for activity because fatty acids are bound in thioester linkage to the sulfhydryl of the prosthetic group.

The protein localises to the cytoplasm. Its pathway is lipid metabolism; fatty acid biosynthesis. Its function is as follows. Carrier of the growing fatty acid chain in fatty acid biosynthesis. The polypeptide is Acyl carrier protein 1 (Pseudomonas aeruginosa (strain ATCC 15692 / DSM 22644 / CIP 104116 / JCM 14847 / LMG 12228 / 1C / PRS 101 / PAO1)).